We begin with the raw amino-acid sequence, 393 residues long: UDP-N-acetylglucosamine--N-acetylmuramyl-(pentapeptide) pyrophosphoryl-undecaprenol N-acetylglucosamine transferase (393 aa).

UDP-N-acetyl-alpha-D-glucosamine contacts are provided by residues 15–17 (TAG), asparagine 129, arginine 171, serine 211, and glutamine 322.

Belongs to the glycosyltransferase 28 family. MurG subfamily.

It is found in the cell membrane. The enzyme catalyses di-trans,octa-cis-undecaprenyl diphospho-N-acetyl-alpha-D-muramoyl-L-alanyl-D-glutamyl-meso-2,6-diaminopimeloyl-D-alanyl-D-alanine + UDP-N-acetyl-alpha-D-glucosamine = di-trans,octa-cis-undecaprenyl diphospho-[N-acetyl-alpha-D-glucosaminyl-(1-&gt;4)]-N-acetyl-alpha-D-muramoyl-L-alanyl-D-glutamyl-meso-2,6-diaminopimeloyl-D-alanyl-D-alanine + UDP + H(+). Its pathway is cell wall biogenesis; peptidoglycan biosynthesis. Functionally, cell wall formation. Catalyzes the transfer of a GlcNAc subunit on undecaprenyl-pyrophosphoryl-MurNAc-pentapeptide (lipid intermediate I) to form undecaprenyl-pyrophosphoryl-MurNAc-(pentapeptide)GlcNAc (lipid intermediate II). This Bifidobacterium longum (strain DJO10A) protein is UDP-N-acetylglucosamine--N-acetylmuramyl-(pentapeptide) pyrophosphoryl-undecaprenol N-acetylglucosamine transferase.